Consider the following 593-residue polypeptide: Kelch-like protein 2 (593 aa).

The tract at residues 1 to 28 is disordered; it reads METPPLPPACTKQGHQKPLDSKDDNTEK. Over residues 17–28 the composition is skewed to basic and acidic residues; sequence KPLDSKDDNTEK. The 68-residue stretch at 56–123 folds into the BTB domain; it reads CDVTIVAEDM…VYTAEIQVTE (68 aa). 6 Kelch repeats span residues 308–353, 354–400, 402–447, 449–496, 497–543, and 545–591; these read LMVV…YMAG, LVFA…VLNG, LYAV…VVGG, LYAV…VLNN, LLYA…AVNG, and LYVV…VIDK.

As to quaternary structure, component of the BCR(KLHL2) E3 ubiquitin ligase complex, at least composed of CUL3 and KLHL2 and RBX1. Binds actin. Interacts with KLHL12. Interacts (via N-terminus) with FYN (via SH3 domain). In terms of tissue distribution, ubiquitous. Detected throughout the brain.

It localises to the cytoplasm. The protein localises to the cytoskeleton. Its subcellular location is the cell projection. It is found in the ruffle. The protein resides in the lamellipodium. It localises to the cytosol. Its pathway is protein modification; protein ubiquitination. Functionally, substrate-specific adapter of a BCR (BTB-CUL3-RBX1) E3 ubiquitin ligase complex that mediates the ubiquitination of target proteins, such as NPTXR, WNK1, WNK3 and WNK4, leading most often to their proteasomal degradation. The BCR(KLHL2) complex catalyzes ubiquitination and degradation of NPTXR. Responsible for degradative ubiquitination of the WNK kinases WNK1, WNK3 and WNK4. Plays a role in the reorganization of the actin cytoskeleton. Promotes growth of cell projections in oligodendrocyte precursors. This Homo sapiens (Human) protein is Kelch-like protein 2.